A 289-amino-acid chain; its full sequence is Protoheme IX farnesyltransferase (289 aa).

9 consecutive transmembrane segments (helical) span residues 18 to 38 (VTSL…EQSP), 40 to 60 (GFLI…SFIF), 87 to 107 (VVQA…VLAV), 111 to 131 (LLTA…YTIF), 139 to 159 (NIVI…AAIG), 168 to 188 (SLFM…AIFL), 212 to 232 (SIFF…FLES), 234 to 254 (MGFL…ILSY), and 269 to 289 (FFFS…DHLI).

The protein belongs to the UbiA prenyltransferase family. Protoheme IX farnesyltransferase subfamily.

The protein resides in the cell inner membrane. The catalysed reaction is heme b + (2E,6E)-farnesyl diphosphate + H2O = Fe(II)-heme o + diphosphate. It functions in the pathway porphyrin-containing compound metabolism; heme O biosynthesis; heme O from protoheme: step 1/1. Functionally, converts heme B (protoheme IX) to heme O by substitution of the vinyl group on carbon 2 of heme B porphyrin ring with a hydroxyethyl farnesyl side group. In Leptospira interrogans serogroup Icterohaemorrhagiae serovar copenhageni (strain Fiocruz L1-130), this protein is Protoheme IX farnesyltransferase.